The following is a 227-amino-acid chain: DNA repair protein RecO (227 aa).

It belongs to the RecO family.

In terms of biological role, involved in DNA repair and RecF pathway recombination. This Pseudomonas entomophila (strain L48) protein is DNA repair protein RecO.